The chain runs to 295 residues: Inorganic pyrophosphatase 1 (295 aa).

Residue aspartate 19 is the Nucleophile of the active site. Residues aspartate 19 and aspartate 21 each contribute to the Mg(2+) site. The active-site Proton donor is aspartate 21. Residues aspartate 30 and aspartate 105 each contribute to the substrate site. Residue aspartate 190 participates in Mg(2+) binding.

This sequence belongs to the HAD-like hydrolase superfamily. Tetramer. It depends on Mg(2+) as a cofactor. Requires Fe(2+) as cofactor. Ni(2+) serves as cofactor. Co(2+) is required as a cofactor. The cofactor is Mn(2+).

The catalysed reaction is diphosphate + H2O = 2 phosphate + H(+). In terms of biological role, catalyzes the specific cleavage of pyrophosphate. The protein is Inorganic pyrophosphatase 1 (PS2) of Arabidopsis thaliana (Mouse-ear cress).